The following is a 238-amino-acid chain: Probable solute-binding protein AdeT2 (238 aa).

It belongs to the bacterial solute-binding protein 7 family.

Functionally, mediates antimicrobial resistance via active efflux. Contributes to resistance to antibiotics such as chloramphenicol, erythromycin and novobiocin. May be part of a tripartite ATP-independent periplasmic (TRAP) transport system. This Acinetobacter baumannii protein is Probable solute-binding protein AdeT2.